The sequence spans 556 residues: 2-succinyl-5-enolpyruvyl-6-hydroxy-3-cyclohexene-1-carboxylate synthase (556 aa).

The protein belongs to the TPP enzyme family. MenD subfamily. As to quaternary structure, homodimer. The cofactor is Mg(2+). It depends on Mn(2+) as a cofactor. Requires thiamine diphosphate as cofactor.

It catalyses the reaction isochorismate + 2-oxoglutarate + H(+) = 5-enolpyruvoyl-6-hydroxy-2-succinyl-cyclohex-3-ene-1-carboxylate + CO2. It functions in the pathway quinol/quinone metabolism; 1,4-dihydroxy-2-naphthoate biosynthesis; 1,4-dihydroxy-2-naphthoate from chorismate: step 2/7. It participates in quinol/quinone metabolism; menaquinone biosynthesis. In terms of biological role, catalyzes the thiamine diphosphate-dependent decarboxylation of 2-oxoglutarate and the subsequent addition of the resulting succinic semialdehyde-thiamine pyrophosphate anion to isochorismate to yield 2-succinyl-5-enolpyruvyl-6-hydroxy-3-cyclohexene-1-carboxylate (SEPHCHC). The polypeptide is 2-succinyl-5-enolpyruvyl-6-hydroxy-3-cyclohexene-1-carboxylate synthase (Escherichia coli O8 (strain IAI1)).